The primary structure comprises 360 residues: Phenylalanine--tRNA ligase alpha subunit (360 aa).

E264 lines the Mg(2+) pocket.

The protein belongs to the class-II aminoacyl-tRNA synthetase family. Phe-tRNA synthetase alpha subunit type 1 subfamily. Tetramer of two alpha and two beta subunits. The cofactor is Mg(2+).

The protein localises to the cytoplasm. It catalyses the reaction tRNA(Phe) + L-phenylalanine + ATP = L-phenylalanyl-tRNA(Phe) + AMP + diphosphate + H(+). This Streptomyces avermitilis (strain ATCC 31267 / DSM 46492 / JCM 5070 / NBRC 14893 / NCIMB 12804 / NRRL 8165 / MA-4680) protein is Phenylalanine--tRNA ligase alpha subunit.